Consider the following 39-residue polypeptide: Cytochrome b6-f complex subunit 5 (39 aa).

A helical transmembrane segment spans residues 5–25 (LLCGIVLGLVPITLLGLFVAA).

The protein belongs to the PetG family. In terms of assembly, the 4 large subunits of the cytochrome b6-f complex are cytochrome b6, subunit IV (17 kDa polypeptide, PetD), cytochrome f and the Rieske protein, while the 4 small subunits are PetG, PetL, PetM and PetN. The complex functions as a dimer.

The protein localises to the cellular thylakoid membrane. Its function is as follows. Component of the cytochrome b6-f complex, which mediates electron transfer between photosystem II (PSII) and photosystem I (PSI), cyclic electron flow around PSI, and state transitions. PetG is required for either the stability or assembly of the cytochrome b6-f complex. This is Cytochrome b6-f complex subunit 5 from Prochlorococcus marinus (strain SARG / CCMP1375 / SS120).